Here is a 385-residue protein sequence, read N- to C-terminus: Acetylornithine aminotransferase (385 aa).

Pyridoxal 5'-phosphate-binding positions include 95-96 and phenylalanine 122; that span reads GA. Position 125 (arginine 125) interacts with N(2)-acetyl-L-ornithine. 208–211 is a pyridoxal 5'-phosphate binding site; that stretch reads DEIQ. The residue at position 237 (lysine 237) is an N6-(pyridoxal phosphate)lysine. Residue threonine 265 coordinates N(2)-acetyl-L-ornithine. Threonine 266 contributes to the pyridoxal 5'-phosphate binding site.

This sequence belongs to the class-III pyridoxal-phosphate-dependent aminotransferase family. ArgD subfamily. As to quaternary structure, homodimer. Requires pyridoxal 5'-phosphate as cofactor.

Its subcellular location is the cytoplasm. It catalyses the reaction N(2)-acetyl-L-ornithine + 2-oxoglutarate = N-acetyl-L-glutamate 5-semialdehyde + L-glutamate. It functions in the pathway amino-acid biosynthesis; L-arginine biosynthesis; N(2)-acetyl-L-ornithine from L-glutamate: step 4/4. This is Acetylornithine aminotransferase from Bacillus subtilis (strain 168).